The chain runs to 802 residues: Leucine--tRNA ligase (802 aa).

Residues 40–51 (PYPSGAGLHVGH) carry the 'HIGH' region motif. A 'KMSKS' region motif is present at residues 576–580 (KMSKS). ATP is bound at residue Lys-579.

This sequence belongs to the class-I aminoacyl-tRNA synthetase family.

It localises to the cytoplasm. The catalysed reaction is tRNA(Leu) + L-leucine + ATP = L-leucyl-tRNA(Leu) + AMP + diphosphate. This is Leucine--tRNA ligase from Bacillus cereus (strain G9842).